A 463-amino-acid polypeptide reads, in one-letter code: Elongation factor 1-alpha (463 aa).

N,N,N-trimethylglycine is present on Gly-2. The residue at position 3 (Lys-3) is an N6,N6-dimethyllysine; alternate. An N6-methyllysine; alternate modification is found at Lys-3. The tr-type G domain maps to 5 to 239 (KNHVNVVVIG…DAIEPPSRPT (235 aa)). A G1 region spans residues 14 to 21 (GHVDSGKS). 14-21 (GHVDSGKS) serves as a coordination point for GTP. The residue at position 30 (Lys-30) is an N6-methyllysine. Residues 70–74 (GITID) are G2. Lys-79 carries the post-translational modification N6,N6,N6-trimethyllysine. Positions 91–94 (DAPG) are G3. GTP contacts are provided by residues 91–95 (DAPGH) and 153–156 (NKMD). Positions 153-156 (NKMD) are G4. The G5 stretch occupies residues 191-193 (SGW). Lys-315 bears the N6,N6-dimethyllysine; alternate mark. N6-methyllysine; alternate is present on Lys-315. The residue at position 389 (Lys-389) is an N6-methyllysine.

It belongs to the TRAFAC class translation factor GTPase superfamily. Classic translation factor GTPase family. EF-Tu/EF-1A subfamily.

It is found in the cytoplasm. This protein promotes the GTP-dependent binding of aminoacyl-tRNA to the A-site of ribosomes during protein biosynthesis. This is Elongation factor 1-alpha (TEF) from Puccinia graminis (Black stem rust fungus).